The sequence spans 393 residues: MTMLAAKADPMTLSMGPHHPSMHGVLRLIVTLDGENVTDCEPILGYLHRGMEKIAENRTIVQYLPYVTRWDYLATMFTEAITVNAPEKLTNIQVPKRASYIRIIMLELSRIASHLLWLGPFMADIGAQTPFFYILREREMIYDLFEAATGMRMMHNFFRIGGVAVDLPYGWVDKCLDFCDYFSLKVDEYERLITYNSIFLKRVEGVGTISREEAINWGLSGLMLRASGVQWDLRKVDHYECYDELDWQVQSQTEGDSLARYLVRIGEMRESVKIIQQALKVIPGGPYENLEARRLNQGKDSEWNDFEYQFISKKPSPTFKLPKQEHYIRVEAPKGELGIYLIGDDSVFPWRWKIRPPGFINLQILPQLVKGMKLADIMTILGSIDIIMGEVDR.

Belongs to the complex I 49 kDa subunit family. In terms of assembly, NDH is composed of at least 16 different subunits, 5 of which are encoded in the nucleus.

The protein localises to the plastid. Its subcellular location is the chloroplast thylakoid membrane. It catalyses the reaction a plastoquinone + NADH + (n+1) H(+)(in) = a plastoquinol + NAD(+) + n H(+)(out). The catalysed reaction is a plastoquinone + NADPH + (n+1) H(+)(in) = a plastoquinol + NADP(+) + n H(+)(out). Its function is as follows. NDH shuttles electrons from NAD(P)H:plastoquinone, via FMN and iron-sulfur (Fe-S) centers, to quinones in the photosynthetic chain and possibly in a chloroplast respiratory chain. The immediate electron acceptor for the enzyme in this species is believed to be plastoquinone. Couples the redox reaction to proton translocation, and thus conserves the redox energy in a proton gradient. In Anthoceros angustus (Hornwort), this protein is NAD(P)H-quinone oxidoreductase subunit H, chloroplastic.